A 543-amino-acid polypeptide reads, in one-letter code: Hydroxylamine reductase (543 aa).

The [4Fe-4S] cluster site is built by Cys-3, Cys-6, Cys-15, and Cys-21. Hybrid [4Fe-2O-2S] cluster is bound by residues His-239, Glu-263, Cys-307, Cys-398, Cys-426, Cys-451, Glu-486, and Lys-488. A Cysteine persulfide modification is found at Cys-398.

It belongs to the HCP family. [4Fe-4S] cluster serves as cofactor. The cofactor is hybrid [4Fe-2O-2S] cluster.

It is found in the cytoplasm. The enzyme catalyses A + NH4(+) + H2O = hydroxylamine + AH2 + H(+). Functionally, catalyzes the reduction of hydroxylamine to form NH(3) and H(2)O. This is Hydroxylamine reductase from Methanococcus vannielii (strain ATCC 35089 / DSM 1224 / JCM 13029 / OCM 148 / SB).